The primary structure comprises 209 residues: Large ribosomal subunit protein uL3 (209 aa).

The disordered stretch occupies residues 133 to 152 (THGNSLSHRVPGSIGQNQTP). Glutamine 150 carries the N5-methylglutamine modification.

The protein belongs to the universal ribosomal protein uL3 family. As to quaternary structure, part of the 50S ribosomal subunit. Forms a cluster with proteins L14 and L19. Post-translationally, methylated by PrmB.

In terms of biological role, one of the primary rRNA binding proteins, it binds directly near the 3'-end of the 23S rRNA, where it nucleates assembly of the 50S subunit. This is Large ribosomal subunit protein uL3 from Sodalis glossinidius (strain morsitans).